An 811-amino-acid chain; its full sequence is Protein MEI2-like 5 (811 aa).

RRM domains follow at residues 193-266 (RTLF…YSIP) and 278-351 (GTLV…PSRP). Positions 371 to 397 (TKHNSFQIGSPSANSPPSLWSQLGSPT) are disordered. Residues 374–397 (NSFQIGSPSANSPPSLWSQLGSPT) show a composition bias toward polar residues.

Functionally, probable RNA-binding protein that may play a role in growth regulation. In Oryza sativa subsp. japonica (Rice), this protein is Protein MEI2-like 5 (ML5).